A 530-amino-acid chain; its full sequence is Carbohydrate sulfotransferase 2 (530 aa).

Residues 1–54 (MSRSPQRALPPGALPRLLQAAPAAAPRALLPQWPRRPGRRWPASPLGMKVFRRK) lie on the Cytoplasmic side of the membrane. Residues 55–75 (ALVLCAGYALLLVLTMLNLLD) traverse the membrane as a helical; Signal-anchor for type II membrane protein segment. Topologically, residues 76–530 (YKWHKEPLQQ…SKTLLRKPRL (455 aa)) are lumenal. A disordered region spans residues 89-119 (DGPLGAAAGAAGGSWGRPGPPPAGPPRAHAR). Residue 173–179 (WRSGSSF) coordinates 3'-phosphoadenylyl sulfate. The N-linked (GlcNAc...) asparagine glycan is linked to N243. 332 to 340 (RDPRAVASS) is a binding site for 3'-phosphoadenylyl sulfate. N-linked (GlcNAc...) asparagine glycosylation is found at N457 and N475.

Belongs to the sulfotransferase 1 family. Gal/GlcNAc/GalNAc subfamily. In terms of assembly, homodimer; disulfide-linked. Homodimerization is not essential for enzyme activity. Post-translationally, glycosylation at Asn-475 is required for catalytic activity. In terms of tissue distribution, widely expressed. Highly expressed in bone marrow, peripheral blood leukocytes, spleen, brain, spinal cord, ovary and placenta. Expressed by high endothelial cells (HEVs) and leukocytes.

The protein resides in the golgi apparatus. Its subcellular location is the trans-Golgi network membrane. The enzyme catalyses 3-O-{N-acetyl-beta-D-glucosaminyl-(1-&gt;3)-beta-D-galactosyl-(1-&gt;3)-N-acetyl-alpha-D-galactosaminyl}-L-threonyl-[protein] + 3'-phosphoadenylyl sulfate = 3-O-{6-O-sulfo-N-acetyl-beta-D-glucosaminyl-(1-&gt;3)-beta-D-galactosyl-(1-&gt;3)-N-acetyl-alpha-D-galactosaminyl}-L-threonyl-[protein] + adenosine 3',5'-bisphosphate + H(+). The catalysed reaction is 3-O-{N-acetyl-beta-D-glucosaminyl-(1-&gt;3)-beta-D-galactosyl-(1-&gt;3)-N-acetyl-alpha-D-galactosaminyl}-L-seryl-[protein] + 3'-phosphoadenylyl sulfate = 3-O-{6-O-sulfo-N-acetyl-beta-D-glucosaminyl-(1-&gt;3)-beta-D-galactosyl-(1-&gt;3)-N-acetyl-alpha-D-galactosaminyl}-L-seryl-[protein] + adenosine 3',5'-bisphosphate + H(+). It catalyses the reaction a 3-O-{beta-D-galactosyl-(1-&gt;3)-[N-acetyl-beta-D-glucosaminyl-(1-&gt;6)]-N-acetyl-alpha-D-galactosaminyl}-L-threonyl-[protein] + 3'-phosphoadenylyl sulfate = 3-O-{beta-D-galactosyl-(1-&gt;3)-[6-O-sulfo-N-acetyl-beta-D-glucosaminyl-(1-&gt;6)]-N-acetyl-alpha-D-galactosaminyl}-L-threonyl-[protein] + adenosine 3',5'-bisphosphate + H(+). It carries out the reaction 3-O-{beta-D-galactosyl-(1-&gt;3)-[N-acetyl-beta-D-glucosaminyl-(1-&gt;6)]-N-acetyl-alpha-D-galactosaminyl}-L-seryl-[protein] + 3'-phosphoadenylyl sulfate = 3-O-{beta-D-galactosyl-(1-&gt;3)-[6-O-sulfo-N-acetyl-beta-D-glucosaminyl-(1-&gt;6)]-N-acetyl-alpha-D-galactosaminyl}-L-seryl-[protein] + adenosine 3',5'-bisphosphate + H(+). Its pathway is protein modification; carbohydrate sulfation. Its function is as follows. Sulfotransferase that utilizes 3'-phospho-5'-adenylyl sulfate (PAPS) as sulfonate donor to catalyze the transfer of sulfate to position 6 of non-reducing N-acetylglucosamine (GlcNAc) residues within keratan-like structures on N-linked glycans and within mucin-associated glycans that can ultimately serve as SELL ligands. SELL ligands are present in high endothelial cells (HEVs) and play a central role in lymphocyte homing at sites of inflammation. Participates in biosynthesis of the SELL ligand sialyl 6-sulfo Lewis X and in lymphocyte homing to Peyer patches. Has no activity toward O-linked sugars. Its substrate specificity may be influenced by its subcellular location. Sulfates GlcNAc residues at terminal, non-reducing ends of oligosaccharide chains. The sequence is that of Carbohydrate sulfotransferase 2 (CHST2) from Homo sapiens (Human).